The chain runs to 968 residues: Alanine--tRNA ligase, cytoplasmic (968 aa).

M1 bears the N-acetylmethionine mark. ATP-binding positions include R77, H95, W176, and I214–N216. L-alanine is bound by residues N216 and D239. G243 is an ATP binding site. Phosphoserine is present on residues S399 and S555. Residues H605, H609, C723, and H727 each coordinate Zn(2+). The Nuclear localization signal motif lies at R750–A763. The residue at position 876 (K876) is an N6-acetyllysine. An N6,N6,N6-trimethyllysine; alternate modification is found at K943. At K943 the chain carries N6,N6-dimethyllysine; alternate. K943 is modified (N6-methyllysine; alternate).

This sequence belongs to the class-II aminoacyl-tRNA synthetase family. As to quaternary structure, monomer. Interacts with ANKRD16; the interaction is direct. Requires Zn(2+) as cofactor. Post-translationally, ISGylated. Methylation at 'Lys-943' by METTL21C.

It localises to the cytoplasm. It is found in the nucleus. The enzyme catalyses tRNA(Ala) + L-alanine + ATP = L-alanyl-tRNA(Ala) + AMP + diphosphate. It catalyses the reaction (S)-lactate + ATP + H(+) = (S)-lactoyl-AMP + diphosphate. It carries out the reaction (S)-lactoyl-AMP + L-lysyl-[protein] = N(6)-[(S)-lactoyl]-L-lysyl-[protein] + AMP + 2 H(+). Its activity is regulated as follows. The protein lactyltransferase activity is inhibited by beta-alanine. Its function is as follows. Catalyzes the attachment of alanine to tRNA(Ala) in a two-step reaction: alanine is first activated by ATP to form Ala-AMP and then transferred to the acceptor end of tRNA(Ala). Also edits incorrectly charged tRNA(Ala) via its editing domain. In presence of high levels of lactate, also acts as a protein lactyltransferase that mediates lactylation of lysine residues in target proteins, such as TEAD1, TP53/p53 and YAP1. Protein lactylation takes place in a two-step reaction: lactate is first activated by ATP to form lactate-AMP and then transferred to lysine residues of target proteins. Acts as an inhibitor of TP53/p53 activity by catalyzing lactylation of TP53/p53. Acts as a positive regulator of the Hippo pathway by mediating lactylation of TEAD1 and YAP1. In Mus musculus (Mouse), this protein is Alanine--tRNA ligase, cytoplasmic.